The sequence spans 465 residues: uncharacterized protein (465 aa).

A TRAM domain is found at 1 to 50 (MEITDLAAEGNALCRIDDMVMFVPFAAPGDRCTVQVVKKKRNFMQGRIVS). [4Fe-4S] cluster contacts are provided by cysteine 63, cysteine 69, cysteine 72, and cysteine 168. Positions 293, 322, 343, and 392 each coordinate S-adenosyl-L-methionine. Catalysis depends on cysteine 419, which acts as the Nucleophile.

The protein belongs to the class I-like SAM-binding methyltransferase superfamily. RNA M5U methyltransferase family.

This is an uncharacterized protein from Porphyromonas gingivalis (strain ATCC BAA-308 / W83).